Here is a 209-residue protein sequence, read N- to C-terminus: Thymidylate kinase (209 aa).

10–17 contributes to the ATP binding site; it reads GPEGAGKT.

The protein belongs to the thymidylate kinase family.

It carries out the reaction dTMP + ATP = dTDP + ADP. In terms of biological role, phosphorylation of dTMP to form dTDP in both de novo and salvage pathways of dTTP synthesis. This Anoxybacillus flavithermus (strain DSM 21510 / WK1) protein is Thymidylate kinase.